Here is a 601-residue protein sequence, read N- to C-terminus: Elongation factor 4 (601 aa).

The region spanning glutamate 7–lysine 189 is the tr-type G domain. GTP is bound by residues aspartate 19 to threonine 24 and asparagine 136 to aspartate 139.

It belongs to the TRAFAC class translation factor GTPase superfamily. Classic translation factor GTPase family. LepA subfamily.

It is found in the cell inner membrane. It catalyses the reaction GTP + H2O = GDP + phosphate + H(+). Functionally, required for accurate and efficient protein synthesis under certain stress conditions. May act as a fidelity factor of the translation reaction, by catalyzing a one-codon backward translocation of tRNAs on improperly translocated ribosomes. Back-translocation proceeds from a post-translocation (POST) complex to a pre-translocation (PRE) complex, thus giving elongation factor G a second chance to translocate the tRNAs correctly. Binds to ribosomes in a GTP-dependent manner. This is Elongation factor 4 from Acidiphilium cryptum (strain JF-5).